A 159-amino-acid chain; its full sequence is Pathogenesis-related leaf protein 4 (159 aa).

The signal sequence occupies residues Met1 to Ala24. A Pyrrolidone carboxylic acid modification is found at Gln25. An SCP domain is found at Leu32–Tyr147. 3 disulfides stabilise this stretch: Cys68/Cys136, Cys109/Cys115, and Cys131/Cys145.

The protein belongs to the CRISP family.

Probably involved in the defense reaction of plants against pathogens. The chain is Pathogenesis-related leaf protein 4 from Solanum lycopersicum (Tomato).